Reading from the N-terminus, the 880-residue chain is Alanine--tRNA ligase (880 aa).

The Zn(2+) site is built by His563, His567, Cys665, and His669.

This sequence belongs to the class-II aminoacyl-tRNA synthetase family. Requires Zn(2+) as cofactor.

It is found in the cytoplasm. It catalyses the reaction tRNA(Ala) + L-alanine + ATP = L-alanyl-tRNA(Ala) + AMP + diphosphate. Its function is as follows. Catalyzes the attachment of alanine to tRNA(Ala) in a two-step reaction: alanine is first activated by ATP to form Ala-AMP and then transferred to the acceptor end of tRNA(Ala). Also edits incorrectly charged Ser-tRNA(Ala) and Gly-tRNA(Ala) via its editing domain. This Desulforudis audaxviator (strain MP104C) protein is Alanine--tRNA ligase.